The following is a 301-amino-acid chain: MKEILYRKSIQDRVRIKGIGLHSGKEVNLTAHPAPSGTGIVFEYRKGLEKASISVELSNVVDTSNATTLGDGLHKIQTVEHLLAAIYALGLTDLILEIDAVEVPIMDGSSLPFLQALESAGIVKYPEIIEPIYVQNPLWVVDGDKYLVLLPSDELKVTYTIDFNHPLLKGQNITISLDKETIKQEILPARTFGFLKDVEALQAKGLAMGGSLDNAIVLTQDGYLNQQLRFENECVRHKILDLFGDISIAGRPIIGHYLASKAGHALDISMAKLVMSSVTGDEISKYKSRRIPLFKRKVAVV.

3 residues coordinate Zn(2+): His81, His237, and Asp241. His264 serves as the catalytic Proton donor.

Belongs to the LpxC family. Zn(2+) is required as a cofactor.

The enzyme catalyses a UDP-3-O-[(3R)-3-hydroxyacyl]-N-acetyl-alpha-D-glucosamine + H2O = a UDP-3-O-[(3R)-3-hydroxyacyl]-alpha-D-glucosamine + acetate. The protein operates within glycolipid biosynthesis; lipid IV(A) biosynthesis; lipid IV(A) from (3R)-3-hydroxytetradecanoyl-[acyl-carrier-protein] and UDP-N-acetyl-alpha-D-glucosamine: step 2/6. Catalyzes the hydrolysis of UDP-3-O-myristoyl-N-acetylglucosamine to form UDP-3-O-myristoylglucosamine and acetate, the committed step in lipid A biosynthesis. The protein is UDP-3-O-acyl-N-acetylglucosamine deacetylase of Leptospira borgpetersenii serovar Hardjo-bovis (strain JB197).